The primary structure comprises 360 residues: Glutamate 5-kinase (360 aa).

Residue Lys-11 participates in ATP binding. Ser-51, Asp-138, and Asn-150 together coordinate substrate. Residues 278 to 356 (KGEIHINECA…GKKPVVHYDY (79 aa)) enclose the PUA domain.

It belongs to the glutamate 5-kinase family.

The protein localises to the cytoplasm. It carries out the reaction L-glutamate + ATP = L-glutamyl 5-phosphate + ADP. It participates in amino-acid biosynthesis; L-proline biosynthesis; L-glutamate 5-semialdehyde from L-glutamate: step 1/2. Its function is as follows. Catalyzes the transfer of a phosphate group to glutamate to form L-glutamate 5-phosphate. In Bacteroides thetaiotaomicron (strain ATCC 29148 / DSM 2079 / JCM 5827 / CCUG 10774 / NCTC 10582 / VPI-5482 / E50), this protein is Glutamate 5-kinase.